Here is a 723-residue protein sequence, read N- to C-terminus: UPF0313 protein YgiQ (723 aa).

Residues 372-650 (AYEMIRFSIN…KALLRYHDPA (279 aa)) form the Radical SAM core domain. [4Fe-4S] cluster-binding residues include cysteine 386, cysteine 390, and cysteine 393. Residues 686-723 (EARRQNRNTRPALTKHTPVEHQRQGLAANKKRGKGAGR) are disordered. Residues 714-723 (NKKRGKGAGR) show a composition bias toward basic residues.

This sequence belongs to the UPF0313 family. The cofactor is [4Fe-4S] cluster.

The protein is UPF0313 protein YgiQ of Salmonella typhimurium (strain LT2 / SGSC1412 / ATCC 700720).